Reading from the N-terminus, the 171-residue chain is Anthrone oxygenase dmxR16 (171 aa).

3 consecutive transmembrane segments (helical) span residues 21-41 (VIAAAFLSAITAGAMANISMI), 67-87 (GHIILPGICVGTCGLYAFSAL), and 96-116 (YALAGITTLSLVPFTWVFMTP). N118 and N129 each carry an N-linked (GlcNAc...) asparagine glycan. A helical transmembrane segment spans residues 145 to 165 (WLHATRSMFPLIGAILGFTGI).

The protein belongs to the anthrone oxygenase family.

Its subcellular location is the membrane. It carries out the reaction emodin anthrone + O2 = emodin + H2O + H(+). It functions in the pathway secondary metabolite biosynthesis. In terms of biological role, anthrone oxygenase; part of the gene cluster that mediates the biosynthesis of the dimeric xanthones cryptosporioptides. The pathway begins with the synthesis of atrochrysone thioester by the polyketide synthase dmx-nrPKS. The atrochrysone carboxyl ACP thioesterase dmxR1 then breaks the thioester bond and releases the atrochrysone carboxylic acid from dmx-nrPKS. Atrochrysone carboxylic acid is decarboxylated by the decarboxylase dmxR15, and oxidized by the anthrone oxygenase dmxR16 to yield emodin. Emodin is then reduced to emodin hydroquinone by the oxidoreductase dmxR7. A-ring reduction by the short chain dehydrogenase dmxR18, dehydration by the scytalone dehydratase-like protein dmxR17 and probable spontaneous re-oxidation, results in overall deoxygenation to chrysophanol. Baeyer-Villiger oxidation by the Baeyer-Villiger monooxygenase (BVMO) dmxR6 then yields monodictylactone in equilibrium with monodictyphenone. In the case of the cryptosporioptides biosynthesis, monodictylactone is reduced at C-12 to an alcohol (by the short chain dehydrogenases dmxR12 or dmxR8) and hydroxylated at C-5 by dmxR9, yielding the electron-rich aromatic which could eliminate H(2)O to form the ortho-quinonemethide, followed by tautomerisation to paraquinone and complete the formal reduction to produce the 10-methylgroup. Conjugate addition of C-4a-OH to the resulting paraquinone by the monooxygenase dmxR10 then gives cyclohexadienone, which is then reduced at C-5 by the short chain dehydrogenase dmxR3 to give the dihydroxanthone. The 6,7-epoxide in the cryptosporioptides could be introduced by the cytochrome P450 monooxygenase dmxL3. The highly reducing PKS dmxL2 manufactures butyrate, which is further carboxylated by dmxL1 to form ethylmalonate. It is not yet clear whether the carboxylation occurs while the butyrate is attached to the ACP of dmxL2, but this unusual fungal metabolite could then be esterified to O-5 by the O-acetyltransferase dmxR13. Finally, dimerization performed by dmxR5 gives the observed dimers cryptosporioptides A, B and C as the final products of the pathway. The chain is Anthrone oxygenase dmxR16 from Cryptosporiopsis sp. (strain 8999).